We begin with the raw amino-acid sequence, 187 residues long: Adenylate kinase (187 aa).

Residue 10–15 (GSGKGT) coordinates ATP. The interval 30–59 (STGDLLRSEVVAGTPLGLQAKQVMAQGDLV) is NMP. Residues Thr31, Arg36, 57 to 59 (DLV), 85 to 88 (GYPR), and Gln92 each bind AMP. Residues 126 to 136 (GRAQAEGREDD) form an LID region. Residue Arg127 coordinates ATP. Residues Arg133 and Arg144 each contribute to the AMP site. Residue Gly172 coordinates ATP.

Belongs to the adenylate kinase family. Monomer.

Its subcellular location is the cytoplasm. The enzyme catalyses AMP + ATP = 2 ADP. It participates in purine metabolism; AMP biosynthesis via salvage pathway; AMP from ADP: step 1/1. Catalyzes the reversible transfer of the terminal phosphate group between ATP and AMP. Plays an important role in cellular energy homeostasis and in adenine nucleotide metabolism. The sequence is that of Adenylate kinase from Xylella fastidiosa (strain 9a5c).